The following is a 534-amino-acid chain: MEDGTQVSTLERVIKEVQAPALSTPTDEMFWSPEDPSKPNLQFLKQHFYREGRLTEEQALWIIHAGTQILRSEPNLLEMDAPITVCGDVHGQYYDLMKLFEVGGDPSETRYLFLGDYVDRGYFSIECVLYLWALKIWYPNSLWLLRGNHECRHLTDYFTFKLECKHKYSERIYEACIESFCALPLAAVMNKQFLCIHGGLSPELHTLEDIKSIDRFREPPTHGLMCDILWADPLEEFGQEKTGDYFVHNSVRGCSYFFSYPAACAFLEKNNLLSIIRAHEAQDAGYRMYRKTRTTGFPSVMTIFSAPNYLDVYNNKAAVLKYENNVMNIRQFNCTPHPYWLPNFMDVFTWSLPFVGEKITDMLIAILNTCSKEELEDETPTSVSPSAPSPPLPMDVESSEFKRRAIKNKILAIGRLSRVFQVLREESERVTELKTAAGGRLPAGTLMLGAEGIKQAITNFEDARKVDLQNERLPPSHEEVIKRSEEERRAALERAQQEADNDTGLATVARRISMSAGSGRSRRQRDAARETREA.

Fe cation contacts are provided by Asp-88, His-90, and Asp-116. Zn(2+) is bound by residues Asp-116 and Asn-148. The active-site Proton donor is His-149. His-197 and His-279 together coordinate Zn(2+). Disordered regions lie at residues 375–398 (LEDETPTSVSPSAPSPPLPMDVES) and 475–534 (PSHE…TREA). Composition is skewed to basic and acidic residues over residues 475–497 (PSHEEVIKRSEEERRAALERAQQ) and 524–534 (QRDAARETREA).

Belongs to the PPP phosphatase family. PP-2B subfamily. Composed of two components (A and B), the A component is the catalytic subunit and the B component confers calcium sensitivity. Requires Fe(3+) as cofactor. Zn(2+) serves as cofactor.

It carries out the reaction O-phospho-L-seryl-[protein] + H2O = L-seryl-[protein] + phosphate. It catalyses the reaction O-phospho-L-threonyl-[protein] + H2O = L-threonyl-[protein] + phosphate. In terms of biological role, calcium-dependent, calmodulin-stimulated protein phosphatase. This subunit may have a role in the calmodulin activation of calcineurin. This is Serine/threonine-protein phosphatase 2B catalytic subunit (cnaA) from Aspergillus fumigatus (strain ATCC MYA-4609 / CBS 101355 / FGSC A1100 / Af293) (Neosartorya fumigata).